Reading from the N-terminus, the 518-residue chain is Probable malate:quinone oxidoreductase (518 aa).

The tract at residues 495–518 is disordered; the sequence is GAIPATTDGQSTAGTEHTPTAATV. Over residues 501–518 the composition is skewed to polar residues; the sequence is TDGQSTAGTEHTPTAATV.

The protein belongs to the MQO family. FAD serves as cofactor.

The catalysed reaction is (S)-malate + a quinone = a quinol + oxaloacetate. It participates in carbohydrate metabolism; tricarboxylic acid cycle; oxaloacetate from (S)-malate (quinone route): step 1/1. The chain is Probable malate:quinone oxidoreductase from Mycolicibacterium gilvum (strain PYR-GCK) (Mycobacterium gilvum (strain PYR-GCK)).